A 234-amino-acid polypeptide reads, in one-letter code: Golgi SNAP receptor complex member 1 (234 aa).

Residues 1–212 lie on the Cytoplasmic side of the membrane; sequence MSETWEALRK…MQKIKTKKQK (212 aa). Residues 54–121 are a coiled coil; it reads VTTEIEGLIE…RDNVDQVLQR (68 aa). Residues 213 to 233 traverse the membrane as a helical; Anchor for type IV membrane protein segment; that stretch reads NTMILAGVISACLIFTIFWII. A topological domain (vesicular) is located at residue Asn234.

Belongs to the GOSR1 family. As to quaternary structure, component of several multiprotein Golgi SNARE complexes.

It localises to the golgi apparatus membrane. Its function is as follows. Involved in transport from the ER to the Golgi apparatus as well as in intra-Golgi transport. It belongs to a super-family of proteins called t-SNAREs or soluble NSF (N-ethylmaleimide-sensitive factor) attachment protein receptor. Cooperates with ykt-6 for proper expression of Golgi-resident proteins. Required along with ykt-6 for normal embryonic development, seam cell division or differentiation, and ray formation. The chain is Golgi SNAP receptor complex member 1 from Caenorhabditis briggsae.